Consider the following 676-residue polypeptide: MYIVSMFGLAGLEALICFIFLFLFSFLTSFKASAQNPFYLNHDCPNRTTYSSNSTYSTNLKTLLSSFASRNASYSTGFQNIRAGQTPDRVTGLFLCRGDLSPEVCSNCVAFSVNESLTRCPNQREAVFYYEECILRYSHKNFLSTVTYEGELIMRNPNNISSIQNQRDQFIDLVQSNMNQAANEAANSSRKFSTIKTELTSLQTLYGLVQCTPDLARQDCFSCLTSSINRMMPLFRIGARQFWPSCNSRYELYAFYNETAIGTPSPPPLFPGSTPPLTSPSIPGKSGNSTVLVVAIVVLAVLLFIALVGYCFLAQRTKKTFDTASASEVGDDMATADSLQLDYRTIQTATNDFAESNKIGRGGFGEVYKGTFSNGKEVAVKRLSKNSRQGEAEFKTEVVVVAKLQHRNLVRLLGFSLQGEERILVYEYMPNKSLDCLLFDPTKQTQLDWMQRYNIIGGIARGILYLHQDSRLTIIHRDLKASNILLDADINPKIADFGMARIFGLDQTQDNTSRIVGTYGYMAPEYAMHGQFSMKSDVYSFGVLVLEIISGRKNSSFDESDGAQDLLTHTWRLWTNRTALDLVDPLIANNCQNSEVVRCIHIGLLCVQEDPAKRPTISTVFMMLTSNTVTLPVPRQPGFFIQSSPVKDPTDSDQSTTTKSTPASIDDELITDLYPR.

The N-terminal stretch at 1 to 34 (MYIVSMFGLAGLEALICFIFLFLFSFLTSFKASA) is a signal peptide. Topologically, residues 35 to 291 (QNPFYLNHDC…IPGKSGNSTV (257 aa)) are extracellular. Gnk2-homologous domains follow at residues 38 to 142 (FYLN…HKNF) and 151 to 255 (ELIM…LYAF). N-linked (GlcNAc...) asparagine glycans are attached at residues N46, N53, N71, N114, N159, N187, N257, and N288. Residues 292–312 (LVVAIVVLAVLLFIALVGYCF) form a helical membrane-spanning segment. Topologically, residues 313-676 (LAQRTKKTFD…DELITDLYPR (364 aa)) are cytoplasmic. Positions 353–639 (FAESNKIGRG…TLPVPRQPGF (287 aa)) constitute a Protein kinase domain. ATP contacts are provided by residues 359-367 (IGRGGFGEV) and K381. A Phosphotyrosine modification is found at Y426. D478 (proton acceptor) is an active-site residue. S482 is modified (phosphoserine). The residue at position 518 (T518) is a Phosphothreonine. Position 526 is a phosphotyrosine (Y526). Residues 640 to 666 (FIQSSPVKDPTDSDQSTTTKSTPASID) form a disordered region. Residues 652-662 (SDQSTTTKSTP) show a composition bias toward low complexity.

It belongs to the protein kinase superfamily. Ser/Thr protein kinase family. CRK subfamily.

The protein localises to the membrane. The enzyme catalyses L-seryl-[protein] + ATP = O-phospho-L-seryl-[protein] + ADP + H(+). The catalysed reaction is L-threonyl-[protein] + ATP = O-phospho-L-threonyl-[protein] + ADP + H(+). This chain is Cysteine-rich receptor-like protein kinase 8 (CRK8), found in Arabidopsis thaliana (Mouse-ear cress).